Consider the following 1016-residue polypeptide: Enhancer of polycomb-like protein 1 (1016 aa).

5 disordered regions span residues 1–50, 96–119, 450–488, 499–518, and 842–1016; these read MAIH…NDLE, LLGS…DASV, KEED…TIGT, GQVH…VKLP, and ARMR…PNRK. Polar residues predominate over residues 35 to 50; sequence YKQSDLPTLNASNDLE. 2 stretches are compositionally biased toward basic and acidic residues: residues 103 to 116 and 457 to 473; these read DGDK…KKTD and ESSK…DSSR. Polar residues predominate over residues 475-488; sequence GSATSMPGSATIGT. A compositionally biased stretch (low complexity) spans 842–883; the sequence is ARMRTLQQQQRNNKQQAAGQSSGSSSASLGSNTNSNSSISGQ. Positions 884 to 902 are enriched in polar residues; that stretch reads ADQGQTNLTNSGITRQGGA. Positions 904-923 are enriched in low complexity; the sequence is VNGSQTSTTNNTRSSVSGGS. Over residues 928–956 the composition is skewed to polar residues; it reads LPTQSSQRSNTNSPLLASQPQGYSQQQKF. Residues 960-971 are compositionally biased toward low complexity; the sequence is PPTSQSQSQSPT. The segment covering 976–994 has biased composition (polar residues); sequence QLQTSKMYNKHGSNITPSN.

Belongs to the enhancer of polycomb family. As to quaternary structure, component of the NuA4 histone acetyltransferase complex.

It localises to the nucleus. Its function is as follows. Component of the NuA4 histone acetyltransferase complex which is involved in transcriptional activation of selected genes principally by acetylation of nucleosomal histone H4 and H2A. The NuA4 complex is also involved in DNA repair. Involved in gene silencing by neighboring heterochromatin, blockage of the silencing spreading along the chromosome, and required for cell cycle progression through G2/M. This is Enhancer of polycomb-like protein 1 (EPL1) from Debaryomyces hansenii (strain ATCC 36239 / CBS 767 / BCRC 21394 / JCM 1990 / NBRC 0083 / IGC 2968) (Yeast).